The sequence spans 224 residues: Small ribosomal subunit protein uS5 (224 aa).

Positions Met-1–Lys-38 are disordered. The span at Glu-13–Lys-38 shows a compositional bias: basic and acidic residues. Residues Tyr-41–Val-104 form the S5 DRBM domain.

It belongs to the universal ribosomal protein uS5 family. As to quaternary structure, part of the 30S ribosomal subunit. Contacts proteins S4 and S8.

With S4 and S12 plays an important role in translational accuracy. Functionally, located at the back of the 30S subunit body where it stabilizes the conformation of the head with respect to the body. In Mycobacterium ulcerans (strain Agy99), this protein is Small ribosomal subunit protein uS5.